A 399-amino-acid polypeptide reads, in one-letter code: MALKFNPLVSQPYKLASSARPPVSTFRSPKFLCLASSSSPALSSKEVESLKKPFTPPREVHLQVLHSMPPQKIEIFKSMEDRAEQNLLPHLKDVEKSWQPQDFLPDPASDGFEDQVKELRERARELPDDYFVVLVGDMITEEALPTYQTMLNTLDGVRDETGASPTSWAVWTRAWTAEENRHGDLLNKYLYLSGRVDMRQIEKTIQYLIGSGMDPRTENNPYLGFIYTSFQERATFVSHGNTARQAKEHGDLKLAQICGTIAADEKRHETAYTKIVEKLLEIDPDGTVVAFADMMRKKISMPAHLMYDGRDDNLFDNFSSVAQRLGVYTAKDYADILEFLAGRWRIESLTGLSGEGNKAQEYLCGLTPRIRRLDERAQARAKKGPKIPFSWIHDREVQL.

The N-terminal 34 residues, 1–34, are a transit peptide targeting the chloroplast; the sequence is MALKFNPLVSQPYKLASSARPPVSTFRSPKFLCL. Residues Glu-141, Glu-179, His-182, Glu-232, Glu-265, and His-268 each contribute to the Fe cation site.

It belongs to the fatty acid desaturase type 2 family. As to quaternary structure, homodimer. It depends on Fe(2+) as a cofactor. As to expression, developing seeds.

It is found in the plastid. It localises to the chloroplast. The enzyme catalyses octadecanoyl-[ACP] + 2 reduced [2Fe-2S]-[ferredoxin] + O2 + 2 H(+) = (9Z)-octadecenoyl-[ACP] + 2 oxidized [2Fe-2S]-[ferredoxin] + 2 H2O. It functions in the pathway lipid metabolism; fatty acid metabolism. Converts stearoyl-ACP to oleoyl-ACP by introduction of a cis double bond between carbons Delta(9) and Delta(10) of the acyl chain. The protein is Stearoyl-[acyl-carrier-protein] 9-desaturase, seed specific, chloroplastic of Brassica napus (Rape).